The chain runs to 668 residues: Probable potassium transport system protein Kup (668 aa).

The next 12 membrane-spanning stretches (helical) occupy residues 17–37 (GILV…LYVM), 59–79 (VSLI…VIAL), 104–124 (IIPA…TPAV), 148–168 (TIIV…QRFG), 175–195 (AFGP…LMNF), 221–241 (LGLF…ALYS), 256–276 (PYIK…LLTV), 299–319 (ILVF…QALI), 350–370 (MYIP…VLAF), 380–400 (YGLS…FYLL), 403–423 (IPAW…VVFF), and 430–450 (FFHG…IMII).

This sequence belongs to the HAK/KUP transporter (TC 2.A.72) family.

It is found in the cell membrane. The enzyme catalyses K(+)(in) + H(+)(in) = K(+)(out) + H(+)(out). Transport of potassium into the cell. Likely operates as a K(+):H(+) symporter. The polypeptide is Probable potassium transport system protein Kup (Enterococcus faecalis (strain ATCC 700802 / V583)).